The following is a 129-amino-acid chain: Small ribosomal subunit protein uS11 (129 aa).

The protein belongs to the universal ribosomal protein uS11 family. As to quaternary structure, part of the 30S ribosomal subunit. Interacts with proteins S7 and S18. Binds to IF-3.

In terms of biological role, located on the platform of the 30S subunit, it bridges several disparate RNA helices of the 16S rRNA. Forms part of the Shine-Dalgarno cleft in the 70S ribosome. The polypeptide is Small ribosomal subunit protein uS11 (Rhizobium etli (strain CIAT 652)).